Consider the following 172-residue polypeptide: Myosin regulatory light chain 2, smooth muscle major isoform (172 aa).

The span at 1-16 (MSSKRAKAKTTKKRPQ) shows a compositional bias: basic residues. The segment at 1–20 (MSSKRAKAKTTKKRPQRATS) is disordered. An N-acetylserine modification is found at Ser-2. EF-hand domains follow at residues 29–64 (SQIQEFKEAFNMIDQNRDGFIDKEDLHDMLASMGKN), 98–133 (DPEDVIRNAFACFDEEASGFIHEDHLRELLTTMGDR), and 134–169 (FTDEEVDEMYREAPIDKKGNFNYVEFTRILKHGAKD). Ca(2+) contacts are provided by Asp-42, Asn-44, Asp-46, and Asp-53.

As to quaternary structure, myosin is a hexamer of 2 heavy chains and 4 light chains.

Myosin regulatory subunit that plays an important role in regulation of both smooth muscle and nonmuscle cell contractile activity. Implicated in cytokinesis, receptor capping, and cell locomotion. This Gallus gallus (Chicken) protein is Myosin regulatory light chain 2, smooth muscle major isoform.